A 983-amino-acid polypeptide reads, in one-letter code: Eukaryotic translation initiation factor 4E transporter (983 aa).

The interval 1-22 (MEKSVAETENGDAFLELKKLPT) is disordered. Serine 4 is subject to Phosphoserine. Residues 29 to 35 (YTKEELL) carry the YXXXXLphi motif motif. Positions 40-99 (RPYSKQRPSCLSEKYDSDGVWDPEKWHASLYPASGRSSPVESLKKESESDRPSLVRRIAD) are disordered. Residues 52-66 (EKYDSDGVWDPEKWH) are compositionally biased toward basic and acidic residues. Phosphoserine is present on residues serine 73 and serine 77. The span at 81–99 (SLKKESESDRPSLVRRIAD) shows a compositional bias: basic and acidic residues. Phosphoserine is present on residues serine 114, serine 119, serine 135, and serine 137. The tract at residues 130-160 (VSSRRSGSPLEKDSDGLRLLGGRRIGSGRII) is interaction with CSDE1. The short motif at 194–210 (RREFGDSKRVFGERRRN) is the Nuclear localization signal element. The tract at residues 206 to 229 (ERRRNDSYTEEEPEWFSAGPTSQS) is disordered. Residues 218-239 (PEWFSAGPTSQSETIELTGFDD) are interaction with DDX6. Phosphoserine is present on residues serine 300, serine 344, serine 352, and serine 373. Residues 341–360 (SNPSRSGSRSSSLGSTPHEE) are disordered. The segment covering 344-355 (SRSGSRSSSLGS) has biased composition (low complexity). Lysine 409 participates in a covalent cross-link: Glycyl lysine isopeptide (Lys-Gly) (interchain with G-Cter in SUMO2). Serine 416 carries the phosphoserine modification. The Nuclear export signal motif lies at 437 to 446 (VEAGLKGLKV). The interval 447–489 (DQQMKNSTPFMAEHLEETLSAASSNRQLKKDGDMTAFNKLVNT) is interaction with LSM14A. Lysine 485 is modified (N6-acetyllysine). Phosphoserine occurs at positions 563 and 586. 4 disordered regions span residues 585-616 (PSPI…SAQM), 642-693 (FYQP…MLSP), 708-800 (REKT…VPGT), and 906-951 (LHPP…SSPV). Residues 612–637 (VSAQMSQLELQQAALEGLALPHDLAV) carry the Nuclear export signal motif. Residues 651–660 (QVDRTRDGLR) show a composition bias toward basic and acidic residues. Serine 692 bears the Phosphoserine mark. Residues 694–712 (SFTPTSVIRKMYESREKTK) form an interaction with PATL1 region. Residues 724 to 734 (DGKEDTQKTSE) are compositionally biased toward basic and acidic residues. Composition is skewed to polar residues over residues 735–774 (ENLL…QTSR) and 910–928 (GSSS…NVPS). 3 positions are modified to phosphoserine: serine 751, serine 919, and serine 949. The interval 938–983 (QLEHRTSQRSSSPVGLAKWFGSDVLQQPLPSMPTKVISVDELEYRQ) is interaction with LSM14A.

It belongs to the 4E-T/EIF4E-T family. In terms of assembly, interacts (via YXXXXLphi motif) with EIF4E. Interacts (via YXXXXLphi motif) with EIF4E2. Interacts with DDX6. Interacts with CSDE1/UNR. Interacts with CNOT1; promoting association with the CCR4-NOT complex. Interacts with LSM14A; promoting EIF4ENIF1 localization to P-bodies. Interacts with PATL1. Interacts with importin beta only in the presence of importin alpha, suggesting a direct interaction with importin alpha. Interacts with APOBEC3G in an RNA-dependent manner. Phosphorylation by MAPK8/JNK1 and or MAPK9/JNK2 in response to oxidative stress promotes P-body assembly. Phosphorylated during meiotic maturation. In terms of tissue distribution, highly expressed in developing oocytes.

The protein localises to the cytoplasm. It localises to the nucleus. It is found in the PML body. Its subcellular location is the nucleus speckle. EIF4E-binding protein that regulates translation and stability of mRNAs in processing bodies (P-bodies). Plays a key role in P-bodies to coordinate the storage of translationally inactive mRNAs in the cytoplasm and prevent their degradation. Acts as a binding platform for multiple RNA-binding proteins: promotes deadenylation of mRNAs via its interaction with the CCR4-NOT complex, and blocks decapping via interaction with eIF4E (EIF4E and EIF4E2), thereby protecting deadenylated and repressed mRNAs from degradation. Component of a multiprotein complex that sequesters and represses translation of proneurogenic factors during neurogenesis. Promotes miRNA-mediated translational repression. Involved in mRNA translational repression mediated by the miRNA effector TNRC6B by protecting TNRC6B-targeted mRNAs from decapping and subsequent decay. Required for the formation of P-bodies. Also acts as a nucleoplasmic shuttling protein, which mediates the nuclear import of EIF4E and DDX6 by a piggy-back mechanism. This is Eukaryotic translation initiation factor 4E transporter from Mus musculus (Mouse).